A 427-amino-acid chain; its full sequence is Enolase (427 aa).

Gln-163 is a binding site for (2R)-2-phosphoglycerate. Residue Glu-205 is the Proton donor of the active site. 3 residues coordinate Mg(2+): Asp-242, Glu-285, and Asp-312. (2R)-2-phosphoglycerate-binding residues include Lys-337, Arg-366, Ser-367, and Lys-388. Lys-337 acts as the Proton acceptor in catalysis.

It belongs to the enolase family. Requires Mg(2+) as cofactor.

The protein resides in the cytoplasm. Its subcellular location is the secreted. The protein localises to the cell surface. It catalyses the reaction (2R)-2-phosphoglycerate = phosphoenolpyruvate + H2O. The protein operates within carbohydrate degradation; glycolysis; pyruvate from D-glyceraldehyde 3-phosphate: step 4/5. In terms of biological role, catalyzes the reversible conversion of 2-phosphoglycerate (2-PG) into phosphoenolpyruvate (PEP). It is essential for the degradation of carbohydrates via glycolysis. In Laribacter hongkongensis (strain HLHK9), this protein is Enolase.